Here is a 197-residue protein sequence, read N- to C-terminus: 7-methyl-GTP pyrophosphatase (197 aa).

The active-site Proton acceptor is the Asp-73.

This sequence belongs to the Maf family. YceF subfamily. A divalent metal cation is required as a cofactor.

It localises to the cytoplasm. The enzyme catalyses N(7)-methyl-GTP + H2O = N(7)-methyl-GMP + diphosphate + H(+). Its function is as follows. Nucleoside triphosphate pyrophosphatase that hydrolyzes 7-methyl-GTP (m(7)GTP). May have a dual role in cell division arrest and in preventing the incorporation of modified nucleotides into cellular nucleic acids. In Alcanivorax borkumensis (strain ATCC 700651 / DSM 11573 / NCIMB 13689 / SK2), this protein is 7-methyl-GTP pyrophosphatase.